Reading from the N-terminus, the 345-residue chain is L-threonine 3-dehydrogenase (345 aa).

C42 contributes to the Zn(2+) binding site. Active-site charge relay system residues include T44 and H47. H67, E68, C97, C100, C103, and C111 together coordinate Zn(2+). Residues I179, D199, R204, 266–268 (LGI), and 290–291 (IY) contribute to the NAD(+) site.

The protein belongs to the zinc-containing alcohol dehydrogenase family. In terms of assembly, homotetramer. The cofactor is Zn(2+).

The protein localises to the cytoplasm. The enzyme catalyses L-threonine + NAD(+) = (2S)-2-amino-3-oxobutanoate + NADH + H(+). It functions in the pathway amino-acid degradation; L-threonine degradation via oxydo-reductase pathway; glycine from L-threonine: step 1/2. Its function is as follows. Catalyzes the NAD(+)-dependent oxidation of L-threonine to 2-amino-3-ketobutyrate. The polypeptide is L-threonine 3-dehydrogenase (Sinorhizobium fredii (strain NBRC 101917 / NGR234)).